A 284-amino-acid chain; its full sequence is Averufin oxidase A (284 aa).

A signal peptide spans 1 to 23; it reads MPTYALLGATGATGSAILRCLLA. 3 N-linked (GlcNAc...) asparagine glycosylation sites follow: asparagine 62, asparagine 86, and asparagine 190.

It belongs to the avfA family.

It functions in the pathway mycotoxin biosynthesis. Averufin oxidase A; part of the fragmented gene cluster that mediates the biosynthesis of dothistromin (DOTH), a polyketide toxin very similar in structure to the aflatoxin precursor, versicolorin B. The first step of the pathway is the conversion of acetate to norsolorinic acid (NOR) and requires the fatty acid synthase subunits hexA and hexB, as well as the polyketide synthase pksA. PksA combines a hexanoyl starter unit and 7 malonyl-CoA extender units to synthesize the precursor NOR. The hexanoyl starter unit is provided to the acyl-carrier protein (ACP) domain by the fungal fatty acid synthase hexA/hexB. The second step is the conversion of NOR to averantin (AVN) and requires the norsolorinic acid ketoreductase nor1, which catalyzes the dehydration of norsolorinic acid to form (1'S)-averantin. The cytochrome P450 monooxygenase avnA then catalyzes the hydroxylation of AVN to 5'hydroxyaverantin (HAVN). The next step is performed by adhA that transforms HAVN to averufin (AVF). Averufin might then be converted to hydroxyversicolorone by cypX and avfA. Hydroxyversicolorone is further converted versiconal hemiacetal acetate (VHA) by moxY. VHA is then the substrate for the versiconal hemiacetal acetate esterase est1 to yield versiconal (VAL). Versicolorin B synthase vbsA then converts VAL to versicolorin B (VERB) by closing the bisfuran ring. Then, the activity of the versicolorin B desaturase verB leads to versicolorin A (VERA). DotB, a predicted chloroperoxidase, may perform epoxidation of the A-ring of VERA. Alternatively, a cytochrome P450, such as cypX or avnA could catalyze this step. It is also possible that another, uncharacterized, cytochrome P450 enzyme is responsible for this step. Opening of the epoxide could potentially be achieved by the epoxide hydrolase epoA. However, epoA seems not to be required for DOTH biosynthesis, but other epoxide hydrolases may have the ability to complement this hydrolysis. Alternatively, opening of the epoxide ring could be achieved non-enzymatically. The next step is the deoxygenation of ring A to yield the 5,8-dihydroxyanthraquinone which is most likely catalyzed by the NADPH dehydrogenase encoded by ver1. The last stages of DOTH biosynthesis are proposed to involve hydroxylation of the bisfuran. OrdB and norB might have oxidative roles here. An alternative possibility is that cytochrome P450 monoogenases such as avnA and cypX might perform these steps in addition to previously proposed steps. The polypeptide is Averufin oxidase A (Dothistroma septosporum (strain NZE10 / CBS 128990) (Red band needle blight fungus)).